The primary structure comprises 89 residues: MFAIISVTGADHTGIIAAVATKCADLGVNINNVSQTIMDGYFTMILHVSFDDSATDIATIQESMADVEKDQNLVIRIQSQAIFDAMNII.

The ACT domain maps to 4–78 (IISVTGADHT…KDQNLVIRIQ (75 aa)).

This sequence belongs to the UPF0237 family.

This chain is UPF0237 protein DIP1286, found in Corynebacterium diphtheriae (strain ATCC 700971 / NCTC 13129 / Biotype gravis).